The following is a 118-amino-acid chain: Small ribosomal subunit protein uS13 (118 aa).

The disordered stretch occupies residues 91 to 118; sequence HRRGLPVRGQRTKTNARTRKGPRKPIKK.

Belongs to the universal ribosomal protein uS13 family. As to quaternary structure, part of the 30S ribosomal subunit. Forms a loose heterodimer with protein S19. Forms two bridges to the 50S subunit in the 70S ribosome.

Functionally, located at the top of the head of the 30S subunit, it contacts several helices of the 16S rRNA. In the 70S ribosome it contacts the 23S rRNA (bridge B1a) and protein L5 of the 50S subunit (bridge B1b), connecting the 2 subunits; these bridges are implicated in subunit movement. Contacts the tRNAs in the A and P-sites. This is Small ribosomal subunit protein uS13 from Photorhabdus laumondii subsp. laumondii (strain DSM 15139 / CIP 105565 / TT01) (Photorhabdus luminescens subsp. laumondii).